The sequence spans 159 residues: Phosphopantetheine adenylyltransferase (159 aa).

T10 provides a ligand contact to substrate. ATP contacts are provided by residues T10 to F11 and H18. Substrate is bound by residues K42, M74, and R88. ATP-binding positions include G89–R91, E99, and W124–S130.

Belongs to the bacterial CoaD family. In terms of assembly, homohexamer. Requires Mg(2+) as cofactor.

It is found in the cytoplasm. It catalyses the reaction (R)-4'-phosphopantetheine + ATP + H(+) = 3'-dephospho-CoA + diphosphate. It participates in cofactor biosynthesis; coenzyme A biosynthesis; CoA from (R)-pantothenate: step 4/5. In terms of biological role, reversibly transfers an adenylyl group from ATP to 4'-phosphopantetheine, yielding dephospho-CoA (dPCoA) and pyrophosphate. The sequence is that of Phosphopantetheine adenylyltransferase from Yersinia pestis.